A 228-amino-acid chain; its full sequence is 5'-methylthioadenosine/S-adenosylhomocysteine nucleosidase (228 aa).

E11 acts as the Proton acceptor in catalysis. Substrate contacts are provided by residues G77, I151, and 172–173 (ME). D196 acts as the Proton donor in catalysis.

It belongs to the PNP/UDP phosphorylase family. MtnN subfamily.

It catalyses the reaction S-adenosyl-L-homocysteine + H2O = S-(5-deoxy-D-ribos-5-yl)-L-homocysteine + adenine. It carries out the reaction S-methyl-5'-thioadenosine + H2O = 5-(methylsulfanyl)-D-ribose + adenine. The enzyme catalyses 5'-deoxyadenosine + H2O = 5-deoxy-D-ribose + adenine. Its pathway is amino-acid biosynthesis; L-methionine biosynthesis via salvage pathway; S-methyl-5-thio-alpha-D-ribose 1-phosphate from S-methyl-5'-thioadenosine (hydrolase route): step 1/2. Its function is as follows. Catalyzes the irreversible cleavage of the glycosidic bond in both 5'-methylthioadenosine (MTA) and S-adenosylhomocysteine (SAH/AdoHcy) to adenine and the corresponding thioribose, 5'-methylthioribose and S-ribosylhomocysteine, respectively. Also cleaves 5'-deoxyadenosine, a toxic by-product of radical S-adenosylmethionine (SAM) enzymes, into 5-deoxyribose and adenine. The polypeptide is 5'-methylthioadenosine/S-adenosylhomocysteine nucleosidase (Staphylococcus carnosus (strain TM300)).